We begin with the raw amino-acid sequence, 47 residues long: Large ribosomal subunit protein bL27c (47 aa).

The disordered stretch occupies residues 1 to 21 (STKNGRDSNAQRLGVKKYGGE).

It belongs to the bacterial ribosomal protein bL27 family.

It is found in the plastid. The protein resides in the chloroplast. This chain is Large ribosomal subunit protein bL27c (rpl27), found in Porphyridium purpureum (Red alga).